The chain runs to 135 residues: Peptide methionine sulfoxide reductase MsrB (135 aa).

The 123-residue stretch at 9–131 (DDYWRSKLTD…NSASIQFEEE (123 aa)) folds into the MsrB domain. 4 residues coordinate Zn(2+): cysteine 48, cysteine 51, cysteine 97, and cysteine 100. Cysteine 120 serves as the catalytic Nucleophile.

It belongs to the MsrB Met sulfoxide reductase family. It depends on Zn(2+) as a cofactor.

It carries out the reaction L-methionyl-[protein] + [thioredoxin]-disulfide + H2O = L-methionyl-(R)-S-oxide-[protein] + [thioredoxin]-dithiol. The protein is Peptide methionine sulfoxide reductase MsrB of Teredinibacter turnerae (strain ATCC 39867 / T7901).